Consider the following 1178-residue polypeptide: MAGRKGTAKVDFLKEIEKEAQQKWEAEKVFEVSASRLEKQKQSSKGKYFVTFPYPYMNGRLHLGHTFSLSKCEFAVGYQRLKGKSCLFPFGLHCTGMPIKACADKLKREIELYGCPPDFPEEEEEEEESSAKPGDIVVRDKAKGKKSKAAAKAGSSKYQWDIMKSLGLSDDDIVKFSEAEHWLDYFPPLAVQDLKTIGLKVDWRRSFITTDVNPYYDSFVRWQFLTLRERNKIKFGKRYTIYSPKDGQPCMDHDRQTGEGVGPQEYTLVKLKVLEPYPSKLSGLKGKNIFLVAATLRPETMFGQTNCWVRPDMKYIGFETANGDIFICTQRAARNMSYQGFTKHNGVVPVVKELMGEEILGASLSAPLTCYKVVYVLPMLTIKEDKGTGVVTSVPSDSPDDLAALRDLKKKQALRTKFGIRDDMVLPFEPVPVLEIPGIGNLPAVTVCDELKIQSQNDREKLAEAKEKLYLRGFYDGVMLVDGFKGQKIQHVKKTIQKNMIDAGDALIYMEPEKQVMSRSADECVVALCDQWYLDYGDENWKKQTFQCLKNMETFCEESRKNFEASLDWLQEHACSRTYGLGTRLPWDEQWLIESLSDSTIYMAFYTVAHLLQGGDLNGQAESPLGIRPQQMTKDVWDYVFFKDAPFPKTQIPKEKLDQLKQEFEFWYPVDLRASGKDLIPNHLSYYIYNHVAMWPEQSDKWPVSVRANGHLLLNSEKMSKSTGNFLTLSQAVDKFSADGMRLALADAGDTVEDANFVEAMADAGILRLYTWVEWVKEMLASCSSLRSGPADSFNDRVFASEMNAGIIKTDQNYEKMMFKEALKTGFFEFQAAKDKYRELATEGMHRELVFRFIEVQTILLTPFCPHLCEHIWTLLGKPDSIMHASWPVAGPVDESLIRSSQYLMEVAHDLRLRLKNYMMPAKGKKTDKQPAQRPSHCTIYVAKNYPVWQHITLTTLRSHFEANNGKLPDNKVIASELGSLPELKKYMKKVMPFVAMIKENMEKKGPRVLDLELEFDEQAVLMENIVYLTNSLELEHIEVKFASEAEDKVREECCPGKPLNVFRTEPGVPVSLVNPQPSSGHFSTKIDIRQGDSCESIIRRLMKTDRGIKDLSKVKLMRFDDPLLGPRRVPVLGREHSEKTLISENAVFHVDLVSKKVHLTENGLRTDIGDTMVYLVH.

The L-leucine site is built by Y54 and Y56. A 'HIGH' region motif is present at residues 62 to 65 (HLGH). S169 is modified (phosphoserine). The segment at 262–511 (GPQEYTLVKL…DAGDALIYME (250 aa)) is editing domain. L596 and S599 together coordinate L-leucine. Positions 718–722 (KMSKS) match the 'KMSKS' region motif. K721 lines the ATP pocket. Position 722 is a phosphoserine (S722). K972 and K1049 each carry N6-acetyllysine.

This sequence belongs to the class-I aminoacyl-tRNA synthetase family.

Its subcellular location is the cytoplasm. It carries out the reaction tRNA(Leu) + L-leucine + ATP = L-leucyl-tRNA(Leu) + AMP + diphosphate. The enzyme catalyses L-methionyl-tRNA(Leu) + H2O = tRNA(Leu) + L-methionine + H(+). Its activity is regulated as follows. 5-fluoro-1,3-dihydro-1-hydroxy-1,2-benzoxaborole inhibits LARS1 by forming a covalent adduct with the 3' adenosine of tRNA(Leu) at the editing site, thus locking the enzyme in an inactive conformation. In terms of biological role, aminoacyl-tRNA synthetase that catalyzes the specific attachment of leucine to its cognate tRNA (tRNA(Leu)). It performs tRNA aminoacylation in a two-step reaction: Leu is initially activated by ATP to form a leucyl-adenylate (Leu-AMP) intermediate; then the leucyl moiety is transferred to the acceptor 3' end of the tRNA to yield leucyl-tRNA. To improve the fidelity of catalytic reactions, it is also able to hydrolyze misactivated aminoacyl-adenylate intermediates (pre-transfer editing) and mischarged aminoacyl-tRNAs (post-transfer editing). This Mus musculus (Mouse) protein is Leucine--tRNA ligase, cytoplasmic (Lars1).